We begin with the raw amino-acid sequence, 303 residues long: Pantothenate synthetase (303 aa).

The segment at 1 to 21 is disordered; it reads MIATGHGGAERRTTAGDGTAR. Residue 48–55 coordinates ATP; it reads MGALHDGH. H55 serves as the catalytic Proton donor. Position 79 (Q79) interacts with (R)-pantoate. Residue Q79 participates in beta-alanine binding. 165–168 is an ATP binding site; the sequence is GRKD. Q171 is a binding site for (R)-pantoate. An ATP-binding site is contributed by 202–205; the sequence is ASSR.

The protein belongs to the pantothenate synthetase family. Homodimer.

It localises to the cytoplasm. It carries out the reaction (R)-pantoate + beta-alanine + ATP = (R)-pantothenate + AMP + diphosphate + H(+). It functions in the pathway cofactor biosynthesis; (R)-pantothenate biosynthesis; (R)-pantothenate from (R)-pantoate and beta-alanine: step 1/1. In terms of biological role, catalyzes the condensation of pantoate with beta-alanine in an ATP-dependent reaction via a pantoyl-adenylate intermediate. The protein is Pantothenate synthetase of Acidothermus cellulolyticus (strain ATCC 43068 / DSM 8971 / 11B).